The primary structure comprises 367 residues: GTP cyclohydrolase FolE2 (367 aa).

The protein belongs to the GTP cyclohydrolase IV family.

The catalysed reaction is GTP + H2O = 7,8-dihydroneopterin 3'-triphosphate + formate + H(+). It functions in the pathway cofactor biosynthesis; 7,8-dihydroneopterin triphosphate biosynthesis; 7,8-dihydroneopterin triphosphate from GTP: step 1/1. Its function is as follows. Converts GTP to 7,8-dihydroneopterin triphosphate. The protein is GTP cyclohydrolase FolE2 of Roseobacter denitrificans (strain ATCC 33942 / OCh 114) (Erythrobacter sp. (strain OCh 114)).